We begin with the raw amino-acid sequence, 224 residues long: ATP-dependent dethiobiotin synthetase BioD (224 aa).

14–19 lines the ATP pocket; it reads GIGKTV. Mg(2+) is bound at residue threonine 18. Lysine 39 is a catalytic residue. Substrate is bound at residue serine 43. Residues aspartate 56, 117–120, and 177–178 contribute to the ATP site; these read EGVG and NE. Residues aspartate 56 and glutamate 117 each contribute to the Mg(2+) site.

It belongs to the dethiobiotin synthetase family. In terms of assembly, homodimer. The cofactor is Mg(2+).

Its subcellular location is the cytoplasm. The catalysed reaction is (7R,8S)-7,8-diammoniononanoate + CO2 + ATP = (4R,5S)-dethiobiotin + ADP + phosphate + 3 H(+). It functions in the pathway cofactor biosynthesis; biotin biosynthesis; biotin from 7,8-diaminononanoate: step 1/2. Functionally, catalyzes a mechanistically unusual reaction, the ATP-dependent insertion of CO2 between the N7 and N8 nitrogen atoms of 7,8-diaminopelargonic acid (DAPA, also called 7,8-diammoniononanoate) to form a ureido ring. The chain is ATP-dependent dethiobiotin synthetase BioD from Xanthomonas campestris pv. campestris (strain ATCC 33913 / DSM 3586 / NCPPB 528 / LMG 568 / P 25).